The primary structure comprises 292 residues: Succinate dehydrogenase assembly factor 2, mitochondrial (292 aa).

2 disordered regions span residues Arg-27–Ser-68 and Thr-266–Ser-292. A compositionally biased stretch (polar residues) spans Thr-55–Ser-68.

It belongs to the SDHAF2 family. In terms of assembly, interacts with the flavoprotein subunit within the SDH catalytic dimer.

Its subcellular location is the mitochondrion matrix. Functionally, plays an essential role in the assembly of succinate dehydrogenase (SDH), an enzyme complex (also referred to as respiratory complex II) that is a component of both the tricarboxylic acid (TCA) cycle and the mitochondrial electron transport chain, and which couples the oxidation of succinate to fumarate with the reduction of ubiquinone (coenzyme Q) to ubiquinol. Required for flavinylation (covalent attachment of FAD) of the flavoprotein subunit of the SDH catalytic dimer. This Aspergillus flavus (strain ATCC 200026 / FGSC A1120 / IAM 13836 / NRRL 3357 / JCM 12722 / SRRC 167) protein is Succinate dehydrogenase assembly factor 2, mitochondrial.